Consider the following 1320-residue polypeptide: Phosphoribosylformylglycinamidine synthase (1320 aa).

Residues 310-321 (GAATGSGGEIRD) and Ala686 contribute to the ATP site. Mg(2+) contacts are provided by Asp687, Glu726, Asn730, and Asp894. Ser896 lines the ATP pocket. The region spanning 1067 to 1320 (VAILREQGVN…MFRNARAFIG (254 aa)) is the Glutamine amidotransferase type-1 domain. Cys1160 serves as the catalytic Nucleophile. Active-site residues include His1285 and Glu1287.

It in the N-terminal section; belongs to the FGAMS family. As to quaternary structure, monomer.

The protein localises to the cytoplasm. It carries out the reaction N(2)-formyl-N(1)-(5-phospho-beta-D-ribosyl)glycinamide + L-glutamine + ATP + H2O = 2-formamido-N(1)-(5-O-phospho-beta-D-ribosyl)acetamidine + L-glutamate + ADP + phosphate + H(+). It functions in the pathway purine metabolism; IMP biosynthesis via de novo pathway; 5-amino-1-(5-phospho-D-ribosyl)imidazole from N(2)-formyl-N(1)-(5-phospho-D-ribosyl)glycinamide: step 1/2. In terms of biological role, phosphoribosylformylglycinamidine synthase involved in the purines biosynthetic pathway. Catalyzes the ATP-dependent conversion of formylglycinamide ribonucleotide (FGAR) and glutamine to yield formylglycinamidine ribonucleotide (FGAM) and glutamate. The chain is Phosphoribosylformylglycinamidine synthase from Colwellia psychrerythraea (strain 34H / ATCC BAA-681) (Vibrio psychroerythus).